The following is a 525-amino-acid chain: MNFILTDFAARLELVARNPEVFKQFGRGVERETLRYSQNGRIATSMHPQGLGSAFTNQWITTDFAESLLEFITPVSHDIDVLLGQLDDIHHFTQTQLGEEKMWPMSMPCYVETEDQITLAQYGSSNSAKMKTLYREGLKRRYGSLMQIISGVHFNFSFPESFWDALHGEQTAEERQATKSEAYFGLIRNYYRFGWLIPYFFGASPAMCSSFLQGRETSLPFEALGKTLYLPKATSLRLSDLGYTNSAQSVLTIGFNSIDEYLEGLSKAIRTPSAEFAKLGVKENGEYRQLNSNVLQIENELYAPIRPKRVAKNGEKPSEALARGGVEYIEVRSLDVNPFTPVGITETQVRFLDLFLTWAALSESQPMDQCELACWRENWNKVVVSGREYGLELQIGCKGEKLSLQAWAHRVFAELRQLAEVMDSAHGDNQYSLACSELEQWIDHPEKTLSAQLLTLIQQNGSLGATGCELGRAYREQNLAHHYRHFSLQQMEQEVALSLIKQSQIEQADEVDFDTYLADYFAYLK.

It belongs to the glutamate--cysteine ligase type 1 family. Type 1 subfamily.

The catalysed reaction is L-cysteine + L-glutamate + ATP = gamma-L-glutamyl-L-cysteine + ADP + phosphate + H(+). It functions in the pathway sulfur metabolism; glutathione biosynthesis; glutathione from L-cysteine and L-glutamate: step 1/2. The protein is Glutamate--cysteine ligase of Vibrio vulnificus (strain YJ016).